Here is a 251-residue protein sequence, read N- to C-terminus: Flap endonuclease Xni (251 aa).

A Mg(2+)-binding site is contributed by Asp-104. The 5'-3' exonuclease domain maps to 160–249 (VTPEQLADYW…LDGNLQQLRL (90 aa)). Residues Leu-171, Ala-172, Pro-180, Val-182, and Ile-185 each coordinate K(+). Residues 184–189 (GIGPKS) form an interaction with DNA region.

The protein belongs to the Xni family. The cofactor is Mg(2+). K(+) serves as cofactor.

Its function is as follows. Has flap endonuclease activity. During DNA replication, flap endonucleases cleave the 5'-overhanging flap structure that is generated by displacement synthesis when DNA polymerase encounters the 5'-end of a downstream Okazaki fragment. This is Flap endonuclease Xni from Klebsiella pneumoniae subsp. pneumoniae (strain ATCC 700721 / MGH 78578).